The following is a 212-amino-acid chain: ER lumen protein-retaining receptor 1 (212 aa).

The Lumenal portion of the chain corresponds to 1-4; sequence MNLF. A helical membrane pass occupies residues 5–24; it reads RFLGDLSHLLAIILLLLKIW. At 25–32 the chain is on the cytoplasmic side; that stretch reads KSRSCAGI. A helical membrane pass occupies residues 33–52; it reads SGKSQVLFAVVFTARYLDLF. Residues 47 to 48 are interaction with the K-D-E-L motif on target proteins; it reads RY. Over 53–58 the chain is Lumenal; it reads TNYISL. A helical membrane pass occupies residues 59 to 79; sequence YNTCMKVVYIACSFTTVWMIY. Residues 80 to 92 are Cytoplasmic-facing; it reads SKFKATYDGNHDT. A helical transmembrane segment spans residues 93–110; the sequence is FRVEFLVVPTAILAFLVN. Residues 111-116 lie on the Lumenal side of the membrane; that stretch reads HDFTPL. Residues 117–135 traverse the membrane as a helical segment; it reads EILWTFSIYLESVAILPQL. Residues 136–149 are Cytoplasmic-facing; the sequence is FMVSKTGEAETITS. A helical transmembrane segment spans residues 150-168; the sequence is HYLFALGVYRTLYLFNWIW. Residues 159-169 form an interaction with the K-D-E-L motif on target proteins region; sequence RTLYLFNWIWR. The Lumenal segment spans residues 169-178; it reads RYHFEGFFDL. The helical transmembrane segment at 179–199 threads the bilayer; that stretch reads IAIVAGLVQTVLYCDFFYLYI. The Cytoplasmic portion of the chain corresponds to 200–212; it reads TKVLKGKKLSLPA. The segment at 204-207 is important for recycling of cargo proteins with the sequence motif K-D-E-L from the Golgi to the endoplasmic reticulum; it reads KGKK. Ser209 carries the post-translational modification Phosphoserine; by PKA.

It belongs to the ERD2 family. In terms of assembly, upon ligand binding the receptor oligomerizes and interacts with components of the transport machinery such as ARFGAP1 and ARF1. Post-translationally, phosphorylation by PKA at Ser-209 is required for endoplasmic reticulum retention function.

It is found in the golgi apparatus membrane. Its subcellular location is the cytoplasmic vesicle. The protein localises to the COPI-coated vesicle membrane. The protein resides in the endoplasmic reticulum membrane. It localises to the endoplasmic reticulum-Golgi intermediate compartment membrane. Functionally, receptor for the C-terminal sequence motif K-D-E-L that is present on endoplasmic reticulum resident proteins and that mediates their recycling from the Golgi back to the endoplasmic reticulum. In Mus musculus (Mouse), this protein is ER lumen protein-retaining receptor 1 (Kdelr1).